We begin with the raw amino-acid sequence, 240 residues long: Ubiquinone biosynthesis O-methyltransferase (240 aa).

S-adenosyl-L-methionine is bound by residues R44, G64, D85, and M129.

It belongs to the methyltransferase superfamily. UbiG/COQ3 family.

The enzyme catalyses a 3-demethylubiquinol + S-adenosyl-L-methionine = a ubiquinol + S-adenosyl-L-homocysteine + H(+). It carries out the reaction a 3-(all-trans-polyprenyl)benzene-1,2-diol + S-adenosyl-L-methionine = a 2-methoxy-6-(all-trans-polyprenyl)phenol + S-adenosyl-L-homocysteine + H(+). The protein operates within cofactor biosynthesis; ubiquinone biosynthesis. Functionally, O-methyltransferase that catalyzes the 2 O-methylation steps in the ubiquinone biosynthetic pathway. This Escherichia coli O157:H7 protein is Ubiquinone biosynthesis O-methyltransferase.